A 275-amino-acid polypeptide reads, in one-letter code: Nurim (275 aa).

Residues 1 to 4 (MASV) lie on the Nuclear side of the membrane. A helical membrane pass occupies residues 5-32 (TFRDGFLCVSALITFVFVFVTGADFVRF). Residues 33-63 (VSFRAINHNLSGAAPLCRDSVPWSVALRDGV) lie on the Perinuclear space side of the membrane. The chain crosses the membrane as a helical span at residues 64–85 (VQKAVAVDVLLLVVFSLQHSLL). Topologically, residues 86-102 (AWTPVKRVCQSVFGVLS) are nuclear. Residues 103 to 119 (RSVYCFTTAAALQILMH) traverse the membrane as a helical segment. At 120-138 (YWRPVTSAPCLWSVSSAPW) the chain is on the perinuclear space side. Residues 139-169 (EIWFPLICFIVHFLCWAIICSILLIFDYPEL) traverse the membrane as a helical segment. Topologically, residues 170 to 196 (LGIKQVYYECLGLGDPLLLKSERAQRL) are nuclear. A helical membrane pass occupies residues 197–215 (YSHLRHPVCVELLTVLWLL). At 216-221 (PSFPLD) the chain is on the perinuclear space side. Residues 222 to 239 (RLLLAVFLTVYLILAHSL) traverse the membrane as a helical segment. The Nuclear segment spans residues 240–275 (DKQDCAYLRHQLRNKLQLFSTPLEGSEQTNDNNKLE).

The protein belongs to the nurim family.

The protein resides in the nucleus inner membrane. This chain is Nurim (nrm), found in Danio rerio (Zebrafish).